The primary structure comprises 703 residues: Elongation factor G (703 aa).

Positions 7–287 constitute a tr-type G domain; sequence KFTRNIGIAA…AVMRYLPSPA (281 aa). GTP-binding positions include 16–23, 84–88, and 138–141; these read AHIDAGKT, DTPGH, and NKMD.

This sequence belongs to the TRAFAC class translation factor GTPase superfamily. Classic translation factor GTPase family. EF-G/EF-2 subfamily.

It localises to the cytoplasm. Its function is as follows. Catalyzes the GTP-dependent ribosomal translocation step during translation elongation. During this step, the ribosome changes from the pre-translocational (PRE) to the post-translocational (POST) state as the newly formed A-site-bound peptidyl-tRNA and P-site-bound deacylated tRNA move to the P and E sites, respectively. Catalyzes the coordinated movement of the two tRNA molecules, the mRNA and conformational changes in the ribosome. This chain is Elongation factor G, found in Christiangramia forsetii (strain DSM 17595 / CGMCC 1.15422 / KT0803) (Gramella forsetii).